The chain runs to 540 residues: Chaperonin GroEL (540 aa).

Residues 30-33 (TLGP), Lys51, 87-91 (DGTTT), Gly415, and Asp495 each bind ATP.

This sequence belongs to the chaperonin (HSP60) family. As to quaternary structure, forms a cylinder of 14 subunits composed of two heptameric rings stacked back-to-back. Interacts with the co-chaperonin GroES.

The protein localises to the cytoplasm. It catalyses the reaction ATP + H2O + a folded polypeptide = ADP + phosphate + an unfolded polypeptide.. Functionally, together with its co-chaperonin GroES, plays an essential role in assisting protein folding. The GroEL-GroES system forms a nano-cage that allows encapsulation of the non-native substrate proteins and provides a physical environment optimized to promote and accelerate protein folding. This is Chaperonin GroEL from Serratia ficaria.